Reading from the N-terminus, the 220-residue chain is Uracil-DNA glycosylase (220 aa).

Asp65 functions as the Proton acceptor in the catalytic mechanism.

This sequence belongs to the uracil-DNA glycosylase (UDG) superfamily. UNG family.

It localises to the cytoplasm. The enzyme catalyses Hydrolyzes single-stranded DNA or mismatched double-stranded DNA and polynucleotides, releasing free uracil.. Excises uracil residues from the DNA which can arise as a result of misincorporation of dUMP residues by DNA polymerase or due to deamination of cytosine. In Bacteroides thetaiotaomicron (strain ATCC 29148 / DSM 2079 / JCM 5827 / CCUG 10774 / NCTC 10582 / VPI-5482 / E50), this protein is Uracil-DNA glycosylase.